Consider the following 2210-residue polypeptide: Mediator of RNA polymerase II transcription subunit 13-like (2210 aa).

Residues 391-400 (SKRSQMSTPT) are compositionally biased toward polar residues. Disordered regions lie at residues 391-414 (SKRS…TWDF), 435-489 (AVGP…PFHH), and 519-582 (VSSS…NPAL). Over residues 445-458 (SQPGFSAGPSSSSS) the composition is skewed to low complexity. Residues 468-480 (KTAERQEKGDKLQ) show a composition bias toward basic and acidic residues. A compositionally biased stretch (polar residues) spans 533–544 (SRNTSKQMNLNP). The span at 551-560 (PISPLPPTLS) shows a compositional bias: pro residues. Ser-553 and Ser-560 each carry phosphoserine. Residues 669–673 (LQRLL) carry the LXXLL motif 1 motif. Positions 736-752 (GTEKDSLKKNKSEDGFG) are enriched in basic and acidic residues. The interval 736–770 (GTEKDSLKKNKSEDGFGTKDVTTPGHSTPVPDGKN) is disordered. Phosphoserine is present on residues Ser-817, Ser-826, and Ser-923. The segment at 1016–1096 (PQMNTPVTLN…STTRPLNSVE (81 aa)) is disordered. Positions 1025-1036 (NSAAPASNSGAG) are enriched in low complexity. Residues 1077–1092 (TDQGSPASTPSTTRPL) are compositionally biased toward polar residues. The short motif at 1225 to 1229 (LLLLL) is the LXXLL motif 2 element. The segment at 1380-1401 (LPIPTLLVGYDKDFLTISPFSL) is leucine-zipper. 2 disordered regions span residues 1530–1656 (QTPP…VTER) and 2045–2080 (GNLH…QGER). A compositionally biased stretch (low complexity) spans 1531–1608 (TPPAAAQGQA…ISTTSSSGFS (78 aa)). A compositionally biased stretch (polar residues) spans 1615–1629 (NPSTGGISADRTQGN). A compositionally biased stretch (low complexity) spans 1637–1650 (DPGQSSSQPSQDGQ). Ser-2083 is subject to Phosphoserine.

The protein belongs to the Mediator complex subunit 13 family. In terms of assembly, component of the Mediator complex, which is composed of MED1, MED4, MED6, MED7, MED8, MED9, MED10, MED11, MED12, MED13, MED13L, MED14, MED15, MED16, MED17, MED18, MED19, MED20, MED21, MED22, MED23, MED24, MED25, MED26, MED27, MED29, MED30, MED31, CCNC, CDK8 and CDC2L6/CDK11. The MED12, MED13, CCNC and CDK8 subunits form a distinct module termed the CDK8 module. Mediator containing the CDK8 module is less active than Mediator lacking this module in supporting transcriptional activation. Individual preparations of the Mediator complex lacking one or more distinct subunits have been variously termed ARC, CRSP, DRIP, PC2, SMCC and TRAP. Highly expressed in brain (cerebellum), heart (aorta), skeletal muscle, kidney, placenta and peripheral blood leukocytes. Highly expressed in fetal brain.

The protein localises to the nucleus. Component of the Mediator complex, a coactivator involved in the regulated transcription of nearly all RNA polymerase II-dependent genes. Mediator functions as a bridge to convey information from gene-specific regulatory proteins to the basal RNA polymerase II transcription machinery. Mediator is recruited to promoters by direct interactions with regulatory proteins and serves as a scaffold for the assembly of a functional preinitiation complex with RNA polymerase II and the general transcription factors. This subunit may specifically regulate transcription of targets of the Wnt signaling pathway and SHH signaling pathway. The sequence is that of Mediator of RNA polymerase II transcription subunit 13-like (MED13L) from Homo sapiens (Human).